Reading from the N-terminus, the 104-residue chain is ATP synthase subunit c (104 aa).

2 consecutive transmembrane segments (helical) span residues 31-51 and 75-95; these read SVVAAGIGLGLAALGGAIGMG and MFIALAMIEAQVIYALVVAMI.

Belongs to the ATPase C chain family. As to quaternary structure, F-type ATPases have 2 components, F(1) - the catalytic core - and F(0) - the membrane proton channel. F(1) has five subunits: alpha(3), beta(3), gamma(1), delta(1), epsilon(1). F(0) has three main subunits: a(1), b(2) and c(10-14). The alpha and beta chains form an alternating ring which encloses part of the gamma chain. F(1) is attached to F(0) by a central stalk formed by the gamma and epsilon chains, while a peripheral stalk is formed by the delta and b chains.

The protein resides in the cell inner membrane. Its function is as follows. F(1)F(0) ATP synthase produces ATP from ADP in the presence of a proton or sodium gradient. F-type ATPases consist of two structural domains, F(1) containing the extramembraneous catalytic core and F(0) containing the membrane proton channel, linked together by a central stalk and a peripheral stalk. During catalysis, ATP synthesis in the catalytic domain of F(1) is coupled via a rotary mechanism of the central stalk subunits to proton translocation. In terms of biological role, key component of the F(0) channel; it plays a direct role in translocation across the membrane. A homomeric c-ring of between 10-14 subunits forms the central stalk rotor element with the F(1) delta and epsilon subunits. The protein is ATP synthase subunit c of Aliarcobacter butzleri (strain RM4018) (Arcobacter butzleri).